The chain runs to 202 residues: MVVVGVLALQGDWIEHIELLREIEGVEAVPVKTEKQLESIDALIIPGGESTTIGRLIERRGLLEPLRDRIRAGLPVLGTCAGSILLAKKVRDRVVGPVEQPLLAVMDIAVLRNAFGRQMNSFEAEVHIEGVGTVHAAFIRAPIIEETWGEARPIAKLNHPLLGEVTVAARQKAIIATVFHPEITGDSKLHKLLVAAAKGRAF.

Residue 48–50 coordinates L-glutamine; the sequence is GES. The Nucleophile role is filled by cysteine 80. L-glutamine is bound by residues arginine 112 and 139–140; that span reads IR. Catalysis depends on charge relay system residues histidine 180 and glutamate 182.

Belongs to the glutaminase PdxT/SNO family. In terms of assembly, in the presence of PdxS, forms a dodecamer of heterodimers. Only shows activity in the heterodimer.

The catalysed reaction is aldehydo-D-ribose 5-phosphate + D-glyceraldehyde 3-phosphate + L-glutamine = pyridoxal 5'-phosphate + L-glutamate + phosphate + 3 H2O + H(+). The enzyme catalyses L-glutamine + H2O = L-glutamate + NH4(+). The protein operates within cofactor biosynthesis; pyridoxal 5'-phosphate biosynthesis. Its function is as follows. Catalyzes the hydrolysis of glutamine to glutamate and ammonia as part of the biosynthesis of pyridoxal 5'-phosphate. The resulting ammonia molecule is channeled to the active site of PdxS. The polypeptide is Pyridoxal 5'-phosphate synthase subunit PdxT (Hyperthermus butylicus (strain DSM 5456 / JCM 9403 / PLM1-5)).